The chain runs to 371 residues: UDP-N-acetylglucosamine--N-acetylmuramyl-(pentapeptide) pyrophosphoryl-undecaprenol N-acetylglucosamine transferase (371 aa).

UDP-N-acetyl-alpha-D-glucosamine-binding positions include 15 to 17, Asn-126, Arg-172, Ser-199, Ile-256, 275 to 280, and Gln-301; these read TGG and ALTVSE.

The protein belongs to the glycosyltransferase 28 family. MurG subfamily.

Its subcellular location is the cell inner membrane. It catalyses the reaction di-trans,octa-cis-undecaprenyl diphospho-N-acetyl-alpha-D-muramoyl-L-alanyl-D-glutamyl-meso-2,6-diaminopimeloyl-D-alanyl-D-alanine + UDP-N-acetyl-alpha-D-glucosamine = di-trans,octa-cis-undecaprenyl diphospho-[N-acetyl-alpha-D-glucosaminyl-(1-&gt;4)]-N-acetyl-alpha-D-muramoyl-L-alanyl-D-glutamyl-meso-2,6-diaminopimeloyl-D-alanyl-D-alanine + UDP + H(+). It participates in cell wall biogenesis; peptidoglycan biosynthesis. Cell wall formation. Catalyzes the transfer of a GlcNAc subunit on undecaprenyl-pyrophosphoryl-MurNAc-pentapeptide (lipid intermediate I) to form undecaprenyl-pyrophosphoryl-MurNAc-(pentapeptide)GlcNAc (lipid intermediate II). The protein is UDP-N-acetylglucosamine--N-acetylmuramyl-(pentapeptide) pyrophosphoryl-undecaprenol N-acetylglucosamine transferase of Francisella tularensis subsp. mediasiatica (strain FSC147).